The sequence spans 188 residues: MTSPTVSTDRPVLRYEVLGSRRFSNYWWATVITIGGTGFFLAGLSSYLHVNLLPIGNPVELFFIPQGIAIGFYGVAALLLAIYLWATIGWNVGGGYNEFNKETGIVRIFRWGFPGKNRQVEISARIPDVQAVRIVIREGVNPKRTIYLRLKGRGDIPLTRVGQPIPLTDLENQAAEIASFLGVAIEGL.

The next 2 helical transmembrane spans lie at 28–48 (WATV…SSYL) and 68–88 (IAIG…WATI).

The protein belongs to the Ycf4 family.

It localises to the cellular thylakoid membrane. Seems to be required for the assembly of the photosystem I complex. This is Photosystem I assembly protein Ycf4 from Cyanothece sp. (strain PCC 7425 / ATCC 29141).